Here is a 293-residue protein sequence, read N- to C-terminus: Phosphatidylserine decarboxylase proenzyme (293 aa).

Residues Asp90, His147, and Ser254 each act as charge relay system; for autoendoproteolytic cleavage activity in the active site. Ser254 acts as the Schiff-base intermediate with substrate; via pyruvic acid; for decarboxylase activity in catalysis. Ser254 bears the Pyruvic acid (Ser); by autocatalysis mark.

This sequence belongs to the phosphatidylserine decarboxylase family. PSD-B subfamily. Prokaryotic type I sub-subfamily. As to quaternary structure, heterodimer of a large membrane-associated beta subunit and a small pyruvoyl-containing alpha subunit. Pyruvate serves as cofactor. Is synthesized initially as an inactive proenzyme. Formation of the active enzyme involves a self-maturation process in which the active site pyruvoyl group is generated from an internal serine residue via an autocatalytic post-translational modification. Two non-identical subunits are generated from the proenzyme in this reaction, and the pyruvate is formed at the N-terminus of the alpha chain, which is derived from the carboxyl end of the proenzyme. The autoendoproteolytic cleavage occurs by a canonical serine protease mechanism, in which the side chain hydroxyl group of the serine supplies its oxygen atom to form the C-terminus of the beta chain, while the remainder of the serine residue undergoes an oxidative deamination to produce ammonia and the pyruvoyl prosthetic group on the alpha chain. During this reaction, the Ser that is part of the protease active site of the proenzyme becomes the pyruvoyl prosthetic group, which constitutes an essential element of the active site of the mature decarboxylase.

The protein resides in the cell membrane. The enzyme catalyses a 1,2-diacyl-sn-glycero-3-phospho-L-serine + H(+) = a 1,2-diacyl-sn-glycero-3-phosphoethanolamine + CO2. It functions in the pathway phospholipid metabolism; phosphatidylethanolamine biosynthesis; phosphatidylethanolamine from CDP-diacylglycerol: step 2/2. Functionally, catalyzes the formation of phosphatidylethanolamine (PtdEtn) from phosphatidylserine (PtdSer). The chain is Phosphatidylserine decarboxylase proenzyme from Yersinia pseudotuberculosis serotype O:1b (strain IP 31758).